Here is a 368-residue protein sequence, read N- to C-terminus: Histidinol-phosphate aminotransferase (368 aa).

Lys-229 is subject to N6-(pyridoxal phosphate)lysine.

It belongs to the class-II pyridoxal-phosphate-dependent aminotransferase family. Histidinol-phosphate aminotransferase subfamily. In terms of assembly, homodimer. Pyridoxal 5'-phosphate serves as cofactor.

It carries out the reaction L-histidinol phosphate + 2-oxoglutarate = 3-(imidazol-4-yl)-2-oxopropyl phosphate + L-glutamate. It functions in the pathway amino-acid biosynthesis; L-histidine biosynthesis; L-histidine from 5-phospho-alpha-D-ribose 1-diphosphate: step 7/9. In Acidovorax ebreus (strain TPSY) (Diaphorobacter sp. (strain TPSY)), this protein is Histidinol-phosphate aminotransferase.